A 351-amino-acid chain; its full sequence is Prostaglandin reductase 2 (351 aa).

F99–Y100 contacts substrate. NADP(+) is bound by residues G165–G168, K192, Y208, N231, C253–Y259, F287–V289, and N337. Residue L288–L290 participates in substrate binding.

Belongs to the NADP-dependent oxidoreductase L4BD family. As to quaternary structure, monomer.

The protein resides in the cytoplasm. The enzyme catalyses 13,14-dihydro-15-oxo-prostaglandin E2 + NAD(+) = 15-oxoprostaglandin E2 + NADH + H(+). It catalyses the reaction 13,14-dihydro-15-oxo-prostaglandin E2 + NADP(+) = 15-oxoprostaglandin E2 + NADPH + H(+). The catalysed reaction is 13,14-dihydro-15-oxo-PGF2alpha + NADP(+) = 15-oxoprostaglandin F2alpha + NADPH + H(+). It carries out the reaction 13,14-dihydro-15-oxo-prostaglandin E1 + NADP(+) = 15-oxoprostaglandin E1 + NADPH + H(+). The enzyme catalyses 13,14-dihydro-15-oxo-prostaglandin F1alpha + NADP(+) = 15-oxoprostaglandin F1alpha + NADPH + H(+). Functionally, functions as 15-oxo-prostaglandin 13-reductase and acts on 15-keto-PGE1, 15-keto-PGE2, 15-keto-PGE1-alpha and 15-keto-PGE2-alpha with highest activity towards 15-keto-PGE2. Overexpression represses transcriptional activity of PPARG and inhibits adipocyte differentiation. The polypeptide is Prostaglandin reductase 2 (PTGR2) (Pongo abelii (Sumatran orangutan)).